Here is a 383-residue protein sequence, read N- to C-terminus: Queuine tRNA-ribosyltransferase (383 aa).

Catalysis depends on Asp-89, which acts as the Proton acceptor. Residues 89 to 93 (DSGGF), Asp-143, Gln-187, and Gly-214 contribute to the substrate site. The tract at residues 245–251 (GVGDLID) is RNA binding. The Nucleophile role is filled by Asp-264. The tract at residues 269 to 273 (TRNAR) is RNA binding; important for wobble base 34 recognition. Positions 302, 304, 307, and 333 each coordinate Zn(2+).

This sequence belongs to the queuine tRNA-ribosyltransferase family. As to quaternary structure, homodimer. Within each dimer, one monomer is responsible for RNA recognition and catalysis, while the other monomer binds to the replacement base PreQ1. Zn(2+) serves as cofactor.

It carries out the reaction 7-aminomethyl-7-carbaguanine + guanosine(34) in tRNA = 7-aminomethyl-7-carbaguanosine(34) in tRNA + guanine. Its pathway is tRNA modification; tRNA-queuosine biosynthesis. Functionally, catalyzes the base-exchange of a guanine (G) residue with the queuine precursor 7-aminomethyl-7-deazaguanine (PreQ1) at position 34 (anticodon wobble position) in tRNAs with GU(N) anticodons (tRNA-Asp, -Asn, -His and -Tyr). Catalysis occurs through a double-displacement mechanism. The nucleophile active site attacks the C1' of nucleotide 34 to detach the guanine base from the RNA, forming a covalent enzyme-RNA intermediate. The proton acceptor active site deprotonates the incoming PreQ1, allowing a nucleophilic attack on the C1' of the ribose to form the product. After dissociation, two additional enzymatic reactions on the tRNA convert PreQ1 to queuine (Q), resulting in the hypermodified nucleoside queuosine (7-(((4,5-cis-dihydroxy-2-cyclopenten-1-yl)amino)methyl)-7-deazaguanosine). In Thermodesulfovibrio yellowstonii (strain ATCC 51303 / DSM 11347 / YP87), this protein is Queuine tRNA-ribosyltransferase.